Here is an 873-residue protein sequence, read N- to C-terminus: Zinc fingers and homeoboxes protein 1 (873 aa).

The segment at 1 to 63 (MASRRKSTTP…ESVDSDNQQN (63 aa)) is disordered. Residues 18–30 (QDPDLELISDLEE) are compositionally biased toward acidic residues. At T36 the chain carries Phosphothreonine. Residues S45, S47, and S48 each carry the phosphoserine modification. 2 C2H2-type zinc fingers span residues 70–93 (YECK…DSEH) and 102–125 (YVCV…LKYH). K159 participates in a covalent cross-link: Glycyl lysine isopeptide (Lys-Gly) (interchain with G-Cter in SUMO2). A disordered region spans residues 198-247 (VHHNSAEGTSEEKENGVKASREENAENTSSSASESNTSTSTVNQVHPSPA). S202 is modified (phosphoserine). Basic and acidic residues predominate over residues 207-221 (SEEKENGVKASREEN). Low complexity predominate over residues 223–238 (ENTSSSASESNTSTST). Residues 272 to 432 (NSNLVPKVLI…QTNVQKSQVP (161 aa)) form a required for dimerization region. The required for interaction with NFYA stretch occupies residues 272–564 (NSNLVPKVLI…SQPKQSWNPF (293 aa)). Residues 284 to 346 (NSIPTYNAAL…LKHGVSWTPE (63 aa)) constitute a DNA-binding region (homeobox 1). A disordered region spans residues 430–455 (QVPAAQPAAETKPATAAVPSSPSVRP). Glycyl lysine isopeptide (Lys-Gly) (interchain with G-Cter in SUMO2) cross-links involve residues K441 and K485. The homeobox 2 DNA-binding region spans 464-526 (SFGIRAKKTK…YNQRNSKSNQ (63 aa)). Disordered stretches follow at residues 540–568 (IDSS…PDFA), 627–664 (DEKV…TGKI), and 731–767 (SSSL…KRMN). Residues 551 to 560 (AAAASQPKQS) show a composition bias toward low complexity. Positions 569 to 631 (PQKFKEKTAE…TKALKDEKVE (63 aa)) form a DNA-binding region, homeobox 3. K629 is covalently cross-linked (Glycyl lysine isopeptide (Lys-Gly) (interchain with G-Cter in SUMO2)). At S648 the chain carries Phosphoserine. Positions 660–722 (GTGKICKKTP…YAWKNGNLKW (63 aa)) form a DNA-binding region, homeobox 4. The required for nuclear localization stretch occupies residues 734–768 (LNGLSSLRKRGRGRPKGRGRGRPRGRPRGGKRMNT). Residues 740–764 (LRKRGRGRPKGRGRGRPRGRPRGGK) are compositionally biased toward basic residues. Phosphoserine is present on S774. Residues 777 to 832 (KFKTGTAILKDYYLKHKFLNEQDLDELVNRSHMGYEQVREWFAERQRRSELGIELF) constitute a DNA-binding region (homeobox 5). The disordered stretch occupies residues 829–873 (IELFEENEEEDEVIDDQEEDEEETDDSDTWEPPRHVKRKLSKSDD). Residues 831 to 857 (LFEENEEEDEVIDDQEEDEEETDDSDT) are compositionally biased toward acidic residues. The segment at 831–873 (LFEENEEEDEVIDDQEEDEEETDDSDTWEPPRHVKRKLSKSDD) is required for repressor activity. Residues 863–873 (HVKRKLSKSDD) are compositionally biased toward basic residues.

It belongs to the ZHX family. In terms of assembly, forms homodimers. Heterodimer (via HD1 domain) with ZHX2 (via HD1 domain). Also forms a heterodimer with ZHX3 which is a prerequisite for repressor activity. Interacts with ATF7IP and NFYA. Interacts (via homeobox domains) with DNMT3B (via PWWP domain). Ubiquitously expressed.

The protein resides in the nucleus. In terms of biological role, acts as a transcriptional repressor. Increases DNMT3B-mediated repressive transcriptional activity when DNMT3B is tethered to DNA. May link molecule between DNMT3B and other co-repressor proteins. The protein is Zinc fingers and homeoboxes protein 1 (Zhx1) of Rattus norvegicus (Rat).